The chain runs to 372 residues: tRNA 2-selenouridine synthase (372 aa).

In terms of domain architecture, Rhodanese spans 19–142 (LASGHPIMDV…MRQYLIDTID (124 aa)). Catalysis depends on cysteine 102, which acts as the S-selanylcysteine intermediate.

It belongs to the SelU family. In terms of assembly, monomer.

It carries out the reaction 5-methylaminomethyl-2-thiouridine(34) in tRNA + selenophosphate + (2E)-geranyl diphosphate + H2O + H(+) = 5-methylaminomethyl-2-selenouridine(34) in tRNA + (2E)-thiogeraniol + phosphate + diphosphate. It catalyses the reaction 5-methylaminomethyl-2-thiouridine(34) in tRNA + (2E)-geranyl diphosphate = 5-methylaminomethyl-S-(2E)-geranyl-thiouridine(34) in tRNA + diphosphate. The enzyme catalyses 5-methylaminomethyl-S-(2E)-geranyl-thiouridine(34) in tRNA + selenophosphate + H(+) = 5-methylaminomethyl-2-(Se-phospho)selenouridine(34) in tRNA + (2E)-thiogeraniol. The catalysed reaction is 5-methylaminomethyl-2-(Se-phospho)selenouridine(34) in tRNA + H2O = 5-methylaminomethyl-2-selenouridine(34) in tRNA + phosphate. Involved in the post-transcriptional modification of the uridine at the wobble position (U34) of tRNA(Lys), tRNA(Glu) and tRNA(Gln). Catalyzes the conversion of 2-thiouridine (S2U-RNA) to 2-selenouridine (Se2U-RNA). Acts in a two-step process involving geranylation of 2-thiouridine (S2U) to S-geranyl-2-thiouridine (geS2U) and subsequent selenation of the latter derivative to 2-selenouridine (Se2U) in the tRNA chain. This chain is tRNA 2-selenouridine synthase, found in Shewanella loihica (strain ATCC BAA-1088 / PV-4).